Reading from the N-terminus, the 201-residue chain is ATP-dependent Clp protease proteolytic subunit (201 aa).

Serine 98 functions as the Nucleophile in the catalytic mechanism. Residue histidine 123 is part of the active site.

It belongs to the peptidase S14 family. In terms of assembly, fourteen ClpP subunits assemble into 2 heptameric rings which stack back to back to give a disk-like structure with a central cavity, resembling the structure of eukaryotic proteasomes.

It localises to the cytoplasm. The catalysed reaction is Hydrolysis of proteins to small peptides in the presence of ATP and magnesium. alpha-casein is the usual test substrate. In the absence of ATP, only oligopeptides shorter than five residues are hydrolyzed (such as succinyl-Leu-Tyr-|-NHMec, and Leu-Tyr-Leu-|-Tyr-Trp, in which cleavage of the -Tyr-|-Leu- and -Tyr-|-Trp bonds also occurs).. In terms of biological role, cleaves peptides in various proteins in a process that requires ATP hydrolysis. Has a chymotrypsin-like activity. Plays a major role in the degradation of misfolded proteins. This Rickettsia typhi (strain ATCC VR-144 / Wilmington) protein is ATP-dependent Clp protease proteolytic subunit.